The sequence spans 1123 residues: Rabphilin-1 (1123 aa).

The segment covering 1 to 17 has biased composition (basic residues); that stretch reads MTKSTKLRHCKQKKKKP. Disordered stretches follow at residues 1-56 and 88-140; these read MTKS…GSRS and SAHN…PSTH. Residues 36 to 46 show a composition bias toward low complexity; that stretch reads DAATTTSTTDA. The RabBD domain occupies 215 to 341; that stretch reads KAQTGSITAA…KKSGAWFYKE (127 aa). The FYVE-type zinc-finger motif lies at 263–328; it reads GNGVTHCLLC…LCKICSEARE (66 aa). 8 residues coordinate Zn(2+): C269, C272, C288, C291, C296, C300, C320, and C323. 4 stretches are compositionally biased toward polar residues: residues 365–375, 387–400, 410–428, and 487–497; these read PNASSAATPLS, TMPS…TTPK, PGLQ…GTRR, and ASSSDGESFVQ. Disordered regions lie at residues 365-710, 737-779, and 796-818; these read PNAS…VGSA, TSRA…LRTS, and HIVS…VPIP. Positions 531–541 are enriched in basic and acidic residues; the sequence is SRREANMERFS. Residues 563-574 are compositionally biased toward low complexity; sequence ESRPSTRSTSPR. Composition is skewed to polar residues over residues 605 to 632 and 649 to 666; these read VVQS…QQQA and PDRT…TSLV. Residues 742–753 are compositionally biased toward low complexity; that stretch reads SPLAASSSFLSS. Over residues 756 to 768 the composition is skewed to basic and acidic residues; the sequence is DDTKQKNRRRDGV. Over residues 803-818 the composition is skewed to low complexity; that stretch reads TSSTTSNQNHTSVPIP. 2 C2 domains span residues 844–967 and 984–1103; these read SLGS…NLYL and DRGK…RQWI. Ca(2+)-binding residues include D875, D881, D936, D938, D943, D1015, D1021, D1075, D1077, and D1083.

Ca(2+) is required as a cofactor.

The protein localises to the synapse. Functionally, rab-3 effector. In Caenorhabditis elegans, this protein is Rabphilin-1 (rbf-1).